Here is a 380-residue protein sequence, read N- to C-terminus: Glycerate kinase (380 aa).

This sequence belongs to the glycerate kinase type-1 family.

It carries out the reaction (R)-glycerate + ATP = (2R)-3-phosphoglycerate + ADP + H(+). The polypeptide is Glycerate kinase (glxK) (Halalkalibacterium halodurans (strain ATCC BAA-125 / DSM 18197 / FERM 7344 / JCM 9153 / C-125) (Bacillus halodurans)).